A 453-amino-acid chain; its full sequence is Bifunctional protein GlmU (453 aa).

Positions 1–231 (MERTCLAVIL…EIEMTGCNNR (231 aa)) are pyrophosphorylase. UDP-N-acetyl-alpha-D-glucosamine contacts are provided by residues 10–13 (LAAG), K24, Q77, 82–83 (GT), 105–107 (YGD), G143, E157, N172, and N229. Residue D107 coordinates Mg(2+). N229 serves as a coordination point for Mg(2+). The tract at residues 232 to 252 (AELAVIERFWQERRRREMMLA) is linker. Residues 253–453 (GVTMIAPETV…AIKAAKKAEA (201 aa)) form an N-acetyltransferase region. Positions 318 and 336 each coordinate UDP-N-acetyl-alpha-D-glucosamine. Catalysis depends on H348, which acts as the Proton acceptor. 2 residues coordinate UDP-N-acetyl-alpha-D-glucosamine: Y351 and N362. Residues A365, 371–372 (NY), S390, S408, and R425 each bind acetyl-CoA.

In the N-terminal section; belongs to the N-acetylglucosamine-1-phosphate uridyltransferase family. The protein in the C-terminal section; belongs to the transferase hexapeptide repeat family. As to quaternary structure, homotrimer. The cofactor is Mg(2+).

It localises to the cytoplasm. It carries out the reaction alpha-D-glucosamine 1-phosphate + acetyl-CoA = N-acetyl-alpha-D-glucosamine 1-phosphate + CoA + H(+). The enzyme catalyses N-acetyl-alpha-D-glucosamine 1-phosphate + UTP + H(+) = UDP-N-acetyl-alpha-D-glucosamine + diphosphate. The protein operates within nucleotide-sugar biosynthesis; UDP-N-acetyl-alpha-D-glucosamine biosynthesis; N-acetyl-alpha-D-glucosamine 1-phosphate from alpha-D-glucosamine 6-phosphate (route II): step 2/2. Its pathway is nucleotide-sugar biosynthesis; UDP-N-acetyl-alpha-D-glucosamine biosynthesis; UDP-N-acetyl-alpha-D-glucosamine from N-acetyl-alpha-D-glucosamine 1-phosphate: step 1/1. It participates in bacterial outer membrane biogenesis; LPS lipid A biosynthesis. Catalyzes the last two sequential reactions in the de novo biosynthetic pathway for UDP-N-acetylglucosamine (UDP-GlcNAc). The C-terminal domain catalyzes the transfer of acetyl group from acetyl coenzyme A to glucosamine-1-phosphate (GlcN-1-P) to produce N-acetylglucosamine-1-phosphate (GlcNAc-1-P), which is converted into UDP-GlcNAc by the transfer of uridine 5-monophosphate (from uridine 5-triphosphate), a reaction catalyzed by the N-terminal domain. This is Bifunctional protein GlmU from Rhizobium etli (strain ATCC 51251 / DSM 11541 / JCM 21823 / NBRC 15573 / CFN 42).